Consider the following 404-residue polypeptide: MTEVTELMRPEGEALNTKEVLLNLGPQHPSTHGVLRLVLQLDGEYVERVDPHIGYLHRGTEKLAESFTYTQIFPLTDRLDYLCPPSNNLAFALAVEKLLGIEAPIRAQYIRVMMAELARISGHLLITGALPMDLGAMTALLYAMREREMIMDLLEMITGARMHTSYCRVGGVREDLPDGFLPKIREFCEIFPNRIRDYERLIENNRVFLSRTQGVGVISATDAIDLGLSGPNLRASGVDWDIRRDEPYEIYDRLDFDVITREEGDCYSRWLCRVDEMRESIRLIEQCMEQMPEGPFQVDIPTIAFPVDKERVHCSMEALIQHFDLSAYGFDVPAGEVYSVIEAPKGELGFYIISDGSPKPFRMKVRAPSFVNLQALFGVTNARYLADMIAVLGSLDPVMAEVDK.

Belongs to the complex I 49 kDa subunit family. NDH-1 is composed of 14 different subunits. Subunits NuoB, C, D, E, F, and G constitute the peripheral sector of the complex.

The protein resides in the cell inner membrane. The catalysed reaction is a quinone + NADH + 5 H(+)(in) = a quinol + NAD(+) + 4 H(+)(out). Functionally, NDH-1 shuttles electrons from NADH, via FMN and iron-sulfur (Fe-S) centers, to quinones in the respiratory chain. The immediate electron acceptor for the enzyme in this species is believed to be ubiquinone. Couples the redox reaction to proton translocation (for every two electrons transferred, four hydrogen ions are translocated across the cytoplasmic membrane), and thus conserves the redox energy in a proton gradient. The chain is NADH-quinone oxidoreductase subunit D 2 from Rhizobium meliloti (strain 1021) (Ensifer meliloti).